The following is a 135-amino-acid chain: Small ribosomal subunit protein bS16 (135 aa).

Positions 94–135 are disordered; the sequence is IGTEMETWQQRNDSRLKRGLDRKAIRRKRKKEAEAKEKESAG. Composition is skewed to basic and acidic residues over residues 105–116 and 124–135; these read NDSRLKRGLDRK and KEAEAKEKESAG.

The protein belongs to the bacterial ribosomal protein bS16 family.

This Chloroherpeton thalassium (strain ATCC 35110 / GB-78) protein is Small ribosomal subunit protein bS16.